Here is a 242-residue protein sequence, read N- to C-terminus: Platelet-derived growth factor subunit B (242 aa).

The first 20 residues, 1–20 (MNRCWALFLSLCCYLRLVSA), serve as a signal peptide directing secretion. Residues 21–81 (EGDPIPEELY…ELESLSRGRR (61 aa)) constitute a propeptide, removed in mature form. Residue Asn63 is glycosylated (N-linked (GlcNAc...) asparagine). 3 disulfides stabilise this stretch: Cys97–Cys141, Cys130–Cys178, and Cys134–Cys180. Residues 219–232 (PPKGKHRKFKHTHD) show a composition bias toward basic residues. The interval 219 to 242 (PPKGKHRKFKHTHDKKALKETLGA) is disordered. Residues 233–242 (KKALKETLGA) are compositionally biased toward basic and acidic residues.

It belongs to the PDGF/VEGF growth factor family. In terms of assembly, antiparallel homodimer; disulfide-linked. Antiparallel heterodimer with PDGFA; disulfide-linked. The PDGFB homodimer interacts with PDGFRA and PDGFRB homodimers, and with heterodimers formed by PDGFRA and PDGFRB. The heterodimer composed of PDGFA and PDGFB interacts with PDGFRB homodimers, and with heterodimers formed by PDGFRA and PDGFRB. Interacts with XLKD1. Interacts with LRP1. Interacts with SORL1 (via the N-terminal ectodomain). Interacts with CD82; this interaction inhibits PDGFB-mediated signaling pathway.

The protein resides in the secreted. In terms of biological role, growth factor that plays an essential role in the regulation of embryonic development, cell proliferation, cell migration, survival and chemotaxis. Potent mitogen for cells of mesenchymal origin. Required for normal proliferation and recruitment of pericytes and vascular smooth muscle cells in the central nervous system, skin, lung, heart and placenta. Required for normal blood vessel development, and for normal development of kidney glomeruli. Plays an important role in wound healing. Signaling is modulated by the formation of heterodimers with PDGFA. This chain is Platelet-derived growth factor subunit B (PDGFB), found in Canis lupus familiaris (Dog).